We begin with the raw amino-acid sequence, 963 residues long: Phosphoenolpyruvate carboxylase (963 aa).

S11 is modified (phosphoserine). Active-site residues include H172 and K600.

The protein belongs to the PEPCase type 1 family. Homotetramer. The cofactor is Mg(2+).

The protein localises to the cytoplasm. It catalyses the reaction oxaloacetate + phosphate = phosphoenolpyruvate + hydrogencarbonate. By light-reversible phosphorylation. Functionally, through the carboxylation of phosphoenolpyruvate (PEP) it forms oxaloacetate, a four-carbon dicarboxylic acid source for the tricarboxylic acid cycle. This is Phosphoenolpyruvate carboxylase (PPC) from Picea abies (Norway spruce).